The primary structure comprises 166 residues: UPF0304 protein VV1_2093 (166 aa).

It belongs to the UPF0304 family.

This chain is UPF0304 protein VV1_2093, found in Vibrio vulnificus (strain CMCP6).